A 149-amino-acid chain; its full sequence is Transcriptional repressor NrdR (149 aa).

Residues C3 to C34 fold into a zinc finger. The 91-residue stretch at P49 to E139 folds into the ATP-cone domain.

It belongs to the NrdR family. The cofactor is Zn(2+).

Its function is as follows. Negatively regulates transcription of bacterial ribonucleotide reductase nrd genes and operons by binding to NrdR-boxes. The polypeptide is Transcriptional repressor NrdR (Paracidovorax citrulli (strain AAC00-1) (Acidovorax citrulli)).